The sequence spans 163 residues: Cytochrome c-type biogenesis protein CcmE (163 aa).

At 1 to 7 (MTRKQRR) the chain is on the cytoplasmic side. A helical; Signal-anchor for type II membrane protein membrane pass occupies residues 8–28 (LVFIGTCGAVLAVALGLVLWA). Residues 29 to 163 (MSGTIVFFRS…RTASGEARAP (135 aa)) are Periplasmic-facing. The heme site is built by histidine 122 and tyrosine 126. The tract at residues 134 to 163 (ALKKSGRWQEGAGHPAPAPPRTASGEARAP) is disordered.

This sequence belongs to the CcmE/CycJ family.

The protein resides in the cell inner membrane. Heme chaperone required for the biogenesis of c-type cytochromes. Transiently binds heme delivered by CcmC and transfers the heme to apo-cytochromes in a process facilitated by CcmF and CcmH. The chain is Cytochrome c-type biogenesis protein CcmE from Methylobacterium sp. (strain 4-46).